A 343-amino-acid polypeptide reads, in one-letter code: Transmembrane protein 120A (343 aa).

The Cytoplasmic segment spans residues 1–132 (MQPPPPGPLG…KQAKFAYKDE (132 aa)). Lys-130 is a binding site for CoA. The helical transmembrane segment at 133–152 (YEKFKLYLTIILILISFTCR) threads the bilayer. Residues 153–158 (FLLNSR) lie on the Extracellular side of the membrane. A helical membrane pass occupies residues 159–177 (VTDAAFNFLLVWYYCTLTI). Topologically, residues 178-190 (RESILINNGSRIK) are cytoplasmic. Ser-187 and Arg-188 together coordinate CoA. A helical membrane pass occupies residues 191–209 (GWWVFHHYVSTFLSGVMLT). Over 210 to 218 (WPDGLMYQK) the chain is Extracellular. The helical transmembrane segment at 219 to 240 (FRNQFLSFSMYQSFVQFLQYYY) threads the bilayer. 4 residues coordinate CoA: Gln-237, Tyr-240, Gln-241, and His-283. Over 241–270 (QSGCLYRLRALGERHTMDLTVEGFQSWMWR) the chain is Cytoplasmic. The chain crosses the membrane as a helical span at residues 271–294 (GLTFLLPFLFFGHFWQLFNALTLF). At 295 to 304 (NLAQDPQCKE) the chain is on the extracellular side. Residues 305-330 (WQVLMCGFPFLLLFLGNFFTTLRVVH) traverse the membrane as a helical segment. At 331–343 (HKFHSQRHGSKKD) the chain is on the cytoplasmic side. CoA is bound at residue Lys-332.

The protein belongs to the TMEM120 family. Homodimer. Forms heterooligomer with TMEM120B. Interacts with PKD2; TMEM120A inhibits PKD2 channel activity through the physical association of PKD2 with TMEM120A. Interacts (via C-terminal domain) with STING1; regulates the trafficking of STING1 from the ER to the ER-Golgi intermediate compartment to elicit antiviral effects. As to expression, expressed in nociceptors.

The protein resides in the cell membrane. The protein localises to the nucleus inner membrane. Its subcellular location is the endoplasmic reticulum. In terms of biological role, multifunctional protein involved in mechanosensation, and plays an essential role in lipid metabolism and adipocyte differentiation. May function as a potential ion channel involved in sensing mechanical stimuli. Mediates the mechanosensitivity of the PKD2-TMEM120A channel complex through direct physical interaction. TMEM120A seems to affect mechanosensation by inhibiting PIEZO2 channels, possibly by altering cellular lipid content. TMEM120A is structurally similar to a lipid-modifying enzyme, ELOVL7, and contains a bound coenzyme A molecule, which suggests it might function as an enzyme in lipid metabolism. Additionnaly, implicated in innate immune response against Zika virus. Acts as a key activator of the antiviral signaling involving STING1. The polypeptide is Transmembrane protein 120A (Homo sapiens (Human)).